A 421-amino-acid chain; its full sequence is Subtilisin-like protease 2 (421 aa).

A signal peptide spans 1-16; the sequence is MQLLNFGLLLLPFVAG. Positions 17-122 are excised as a propeptide; the sequence is DLAPQPEPLL…VHPDQHVYLA (106 aa). One can recognise an Inhibitor I9 domain in the interval 36 to 122; sequence QYIVTLKEGL…VHPDQHVYLA (87 aa). The region spanning 131–421 is the Peptidase S8 domain; sequence RWGLGYMSSK…ERKFTLPKYY (291 aa). Active-site charge relay system residues include Asp-169 and His-201. N-linked (GlcNAc...) asparagine glycosylation is found at Asn-248, Asn-261, and Asn-348. The active-site Charge relay system is the Ser-357. The N-linked (GlcNAc...) asparagine glycan is linked to Asn-388.

Belongs to the peptidase S8 family.

The protein localises to the secreted. Its function is as follows. Secreted subtilisin-like serine protease with keratinolytic activity that contributes to pathogenicity. This chain is Subtilisin-like protease 2 (SUB2), found in Trichophyton verrucosum (strain HKI 0517).